A 1111-amino-acid polypeptide reads, in one-letter code: ATP-dependent DNA helicase mph1 (1111 aa).

Composition is skewed to acidic residues over residues 1–18 and 47–65; these read MSVSGDDSDDYFDHEIDD and VFDESDISIDQGDGEDEFQ. 4 disordered regions span residues 1–81, 101–144, 210–240, and 259–280; these read MSVS…EDVE, FVTQ…HQPD, AFDSDLSLSPPRTTSQATRGPPVQSQFRTNR, and IPSQRGEQILSPPEKNEPPTHH. 2 stretches are compositionally biased toward polar residues: residues 132–143 and 215–238; these read PTTTTVDASHQP and LSLSPPRTTSQATRGPPVQSQFRT. One can recognise a Helicase ATP-binding domain in the interval 306-474; that stretch reads IAQRGLFHNL…AVIDGLGIAK (169 aa). Residue 319–326 participates in ATP binding; the sequence is LPTGLGKT. Residues 422–425 carry the DEAH box motif; the sequence is DEAH. The Helicase C-terminal domain occupies 644–818; the sequence is YLKQVVLNHF…GTRFTFHDDT (175 aa). Disordered regions lie at residues 836–898, 998–1047, and 1092–1111; these read IDIP…RKPT, SVLS…CTPE, and AERHVSRKRNRFVLDDDTEE. Basic residues predominate over residues 852 to 864; sequence KRARPPKRPPKKF.

The protein belongs to the DEAD box helicase family. DEAH subfamily. FANCM sub-subfamily. Interacts with the MHF histone-fold complex to form the FANCM-MHF complex.

The protein localises to the nucleus. It carries out the reaction ATP + H2O = ADP + phosphate + H(+). In terms of biological role, ATP-dependent DNA helicase involved in DNA damage repair by homologous recombination and in genome maintenance. Capable of unwinding D-loops. Plays a role in limiting crossover recombinants during mitotic DNA double-strand break (DSB) repair. Component of a FANCM-MHF complex which promotes gene conversion at blocked replication forks, probably by reversal of the stalled fork. In Neosartorya fischeri (strain ATCC 1020 / DSM 3700 / CBS 544.65 / FGSC A1164 / JCM 1740 / NRRL 181 / WB 181) (Aspergillus fischerianus), this protein is ATP-dependent DNA helicase mph1.